We begin with the raw amino-acid sequence, 360 residues long: Phosphoserine aminotransferase (360 aa).

Residue arginine 41 participates in L-glutamate binding. The pyridoxal 5'-phosphate site is built by tryptophan 101, threonine 152, aspartate 172, and glutamine 195. Residue lysine 196 is modified to N6-(pyridoxal phosphate)lysine. 237–238 contacts pyridoxal 5'-phosphate; that stretch reads NT.

The protein belongs to the class-V pyridoxal-phosphate-dependent aminotransferase family. SerC subfamily. Homodimer. The cofactor is pyridoxal 5'-phosphate.

The protein resides in the cytoplasm. It carries out the reaction O-phospho-L-serine + 2-oxoglutarate = 3-phosphooxypyruvate + L-glutamate. It catalyses the reaction 4-(phosphooxy)-L-threonine + 2-oxoglutarate = (R)-3-hydroxy-2-oxo-4-phosphooxybutanoate + L-glutamate. It participates in amino-acid biosynthesis; L-serine biosynthesis; L-serine from 3-phospho-D-glycerate: step 2/3. It functions in the pathway cofactor biosynthesis; pyridoxine 5'-phosphate biosynthesis; pyridoxine 5'-phosphate from D-erythrose 4-phosphate: step 3/5. Catalyzes the reversible conversion of 3-phosphohydroxypyruvate to phosphoserine and of 3-hydroxy-2-oxo-4-phosphonooxybutanoate to phosphohydroxythreonine. The polypeptide is Phosphoserine aminotransferase (Burkholderia vietnamiensis (strain G4 / LMG 22486) (Burkholderia cepacia (strain R1808))).